Here is a 266-residue protein sequence, read N- to C-terminus: Undecaprenyl-diphosphatase (266 aa).

Helical transmembrane passes span 1–21, 39–59, 87–107, 117–137, 153–173, 189–209, 216–236, and 246–266; these read MEFF…FIPI, PGSS…FWYF, IFIG…FVPG, LSIA…DIST, YIGI…GATI, FSFL…FFSA, FPFL…LLAI, and HGLK…LFNL.

Belongs to the UppP family.

It localises to the cell inner membrane. It catalyses the reaction di-trans,octa-cis-undecaprenyl diphosphate + H2O = di-trans,octa-cis-undecaprenyl phosphate + phosphate + H(+). Functionally, catalyzes the dephosphorylation of undecaprenyl diphosphate (UPP). Confers resistance to bacitracin. In Prochlorococcus marinus subsp. pastoris (strain CCMP1986 / NIES-2087 / MED4), this protein is Undecaprenyl-diphosphatase.